A 169-amino-acid polypeptide reads, in one-letter code: Ribosome maturation factor RimM (169 aa).

Residues 94–166 (EEGFYDHELE…TATITPPDGL (73 aa)) form the PRC barrel domain.

The protein belongs to the RimM family. As to quaternary structure, binds ribosomal protein uS19.

It localises to the cytoplasm. Functionally, an accessory protein needed during the final step in the assembly of 30S ribosomal subunit, possibly for assembly of the head region. Essential for efficient processing of 16S rRNA. May be needed both before and after RbfA during the maturation of 16S rRNA. It has affinity for free ribosomal 30S subunits but not for 70S ribosomes. In Corynebacterium efficiens (strain DSM 44549 / YS-314 / AJ 12310 / JCM 11189 / NBRC 100395), this protein is Ribosome maturation factor RimM.